A 207-amino-acid polypeptide reads, in one-letter code: dTTP/UTP pyrophosphatase (207 aa).

The active-site Proton acceptor is D79.

It belongs to the Maf family. YhdE subfamily. A divalent metal cation serves as cofactor.

It is found in the cytoplasm. It catalyses the reaction dTTP + H2O = dTMP + diphosphate + H(+). It carries out the reaction UTP + H2O = UMP + diphosphate + H(+). Nucleoside triphosphate pyrophosphatase that hydrolyzes dTTP and UTP. May have a dual role in cell division arrest and in preventing the incorporation of modified nucleotides into cellular nucleic acids. The chain is dTTP/UTP pyrophosphatase from Rhodopseudomonas palustris (strain HaA2).